The sequence spans 170 residues: Large ribosomal subunit protein uL10 (170 aa).

It belongs to the universal ribosomal protein uL10 family. In terms of assembly, part of the ribosomal stalk of the 50S ribosomal subunit. The N-terminus interacts with L11 and the large rRNA to form the base of the stalk. The C-terminus forms an elongated spine to which L12 dimers bind in a sequential fashion forming a multimeric L10(L12)X complex.

In terms of biological role, forms part of the ribosomal stalk, playing a central role in the interaction of the ribosome with GTP-bound translation factors. This is Large ribosomal subunit protein uL10 from Fusobacterium nucleatum subsp. nucleatum (strain ATCC 25586 / DSM 15643 / BCRC 10681 / CIP 101130 / JCM 8532 / KCTC 2640 / LMG 13131 / VPI 4355).